The chain runs to 214 residues: Adenylate kinase (214 aa).

Gly10–Thr15 is an ATP binding site. The segment at Ser30–Val59 is NMP. AMP is bound by residues Thr31, Arg36, Gln57–Val59, Gly85–Arg88, and Gln92. An LID region spans residues Gly122–Asp159. Residues Arg123 and Val132–Tyr133 each bind ATP. 2 residues coordinate AMP: Arg156 and Arg167. Gln200 lines the ATP pocket.

Belongs to the adenylate kinase family. Monomer.

It localises to the cytoplasm. The enzyme catalyses AMP + ATP = 2 ADP. The protein operates within purine metabolism; AMP biosynthesis via salvage pathway; AMP from ADP: step 1/1. In terms of biological role, catalyzes the reversible transfer of the terminal phosphate group between ATP and AMP. Plays an important role in cellular energy homeostasis and in adenine nucleotide metabolism. The sequence is that of Adenylate kinase from Shewanella amazonensis (strain ATCC BAA-1098 / SB2B).